Consider the following 297-residue polypeptide: 4-hydroxy-tetrahydrodipicolinate synthase (297 aa).

Pyruvate is bound at residue threonine 55. Tyrosine 144 functions as the Proton donor/acceptor in the catalytic mechanism. Lysine 172 acts as the Schiff-base intermediate with substrate in catalysis. Isoleucine 213 contacts pyruvate.

It belongs to the DapA family. As to quaternary structure, homotetramer; dimer of dimers.

It is found in the cytoplasm. The catalysed reaction is L-aspartate 4-semialdehyde + pyruvate = (2S,4S)-4-hydroxy-2,3,4,5-tetrahydrodipicolinate + H2O + H(+). The protein operates within amino-acid biosynthesis; L-lysine biosynthesis via DAP pathway; (S)-tetrahydrodipicolinate from L-aspartate: step 3/4. Catalyzes the condensation of (S)-aspartate-beta-semialdehyde [(S)-ASA] and pyruvate to 4-hydroxy-tetrahydrodipicolinate (HTPA). The protein is 4-hydroxy-tetrahydrodipicolinate synthase of Lactococcus lactis subsp. cremoris (strain SK11).